The sequence spans 232 residues: MRILVVDNYDSFVFNLVQYLGQLGIEAEVWRNDDHRLSDEAAVAGQFDGVLLSPGPGTPERAGASVSIVHACAAAHTPLLGVCLGHQAIGVAFGATVDRAPELLHGKTSSVFHTNVGVLQGLPDPFTATRYHSLTILPKSLPAVLRVTARTSSGVIMAVQHTGLPIHGVQFHPESILTEGGHRILANWLTCCGWTQDDTLVRRLENEVLTAISPHFPTSTASAGEATGRTSA.

A Glutamine amidotransferase type-1 domain is found at 2–198 (RILVVDNYDS…LTCCGWTQDD (197 aa)). L-glutamine is bound at residue 55–57 (GPG). The active-site Nucleophile; for GATase activity is the C83. L-glutamine contacts are provided by residues Q87 and 133–134 (SL). Active-site for GATase activity residues include H172 and E174.

As to quaternary structure, heterotetramer consisting of two non-identical subunits: a beta subunit (TrpG) and a large alpha subunit (TrpE).

It catalyses the reaction chorismate + L-glutamine = anthranilate + pyruvate + L-glutamate + H(+). Its pathway is amino-acid biosynthesis; L-tryptophan biosynthesis; L-tryptophan from chorismate: step 1/5. Functionally, part of a heterotetrameric complex that catalyzes the two-step biosynthesis of anthranilate, an intermediate in the biosynthesis of L-tryptophan. In the first step, the glutamine-binding beta subunit (TrpG) of anthranilate synthase (AS) provides the glutamine amidotransferase activity which generates ammonia as a substrate that, along with chorismate, is used in the second step, catalyzed by the large alpha subunit of AS (TrpE) to produce anthranilate. In the absence of TrpG, TrpE can synthesize anthranilate directly from chorismate and high concentrations of ammonia. The chain is Anthranilate synthase component 2 (trpG) from Mycobacterium tuberculosis (strain CDC 1551 / Oshkosh).